A 164-amino-acid polypeptide reads, in one-letter code: Peptidyl-prolyl cis-trans isomerase A-like 4D (164 aa).

The 157-residue stretch at 7-163 folds into the PPIase cyclophilin-type domain; the sequence is FFEITRDGKP…KKITIADCGQ (157 aa).

The protein belongs to the cyclophilin-type PPIase family. PPIase A subfamily.

The protein localises to the cytoplasm. It carries out the reaction [protein]-peptidylproline (omega=180) = [protein]-peptidylproline (omega=0). Functionally, PPIases accelerate the folding of proteins. It catalyzes the cis-trans isomerization of proline imidic peptide bonds in oligopeptides. In Homo sapiens (Human), this protein is Peptidyl-prolyl cis-trans isomerase A-like 4D.